A 519-amino-acid polypeptide reads, in one-letter code: MSTFVKVTDLITIMFFLAIAAVITASNTAELDVLEMARTAVVEAKTSFGSMAVTEATSEVAGSYYKLGLSECEKLYDESEARLSKLVVDHENFTVEDVRTWLSGVLANHHTCLDGLIQQRQGHKPLVHSNVTFVLHEALAFYKKSRGHMKKRLHGPARQGHGPTRPKHRPTRPNHGPGRSHHGPSRPNQNGGMLVSWNPTSSRADFVVARDGSATHRTINQALAAVSRMGKSRLNRVIIYIKAGVYNEKIEIDRHMKNIMLVGDGMDRTIVTNNRNVPDGSTTYGSATFGVSGDGFWARDITFENTAGPHKHQAVALRVSSDLSLFYRCSFKGYQDTLFTHSLRQFYRDCHIYGTIDFIFGDAAAVFQNCDIFVRRPMDHQGNMITAQGRDDPHTNSGISIQHSRIRAAPEFEAVKGRFKSYLGRPWKKYSRTVFLKTDIDELIDPRGWREWSGSYALSTLYYGEFMNTGAGAGTGRRVNWPGFHVLRGEEEASPFTVSRFIQGDSWIPITGVPFSAGV.

The signal sequence occupies residues 1–25 (MSTFVKVTDLITIMFFLAIAAVITA). The pectinesterase inhibitor 36 stretch occupies residues 27-141 (NTAELDVLEM…TFVLHEALAF (115 aa)). N92 and N130 each carry an N-linked (GlcNAc...) asparagine glycan. The tract at residues 147–196 (GHMKKRLHGPARQGHGPTRPKHRPTRPNHGPGRSHHGPSRPNQNGGMLVS) is disordered. Residues 164–184 (TRPKHRPTRPNHGPGRSHHGP) are compositionally biased toward basic residues. Residues 186 to 196 (RPNQNGGMLVS) show a composition bias toward polar residues. The interval 205-505 (DFVVARDGSA…FTVSRFIQGD (301 aa)) is pectinesterase 36. Substrate is bound by residues T283 and Q313. Catalysis depends on D336, which acts as the Proton donor; for pectinesterase activity. D357 serves as the catalytic Nucleophile; for pectinesterase activity. 2 residues coordinate substrate: R425 and W427.

The protein in the N-terminal section; belongs to the PMEI family. In the C-terminal section; belongs to the pectinesterase family. Expressed in siliques.

It is found in the secreted. The protein resides in the cell wall. The enzyme catalyses [(1-&gt;4)-alpha-D-galacturonosyl methyl ester](n) + n H2O = [(1-&gt;4)-alpha-D-galacturonosyl](n) + n methanol + n H(+). The protein operates within glycan metabolism; pectin degradation; 2-dehydro-3-deoxy-D-gluconate from pectin: step 1/5. Its function is as follows. Acts in the modification of cell walls via demethylesterification of cell wall pectin. This chain is Probable pectinesterase/pectinesterase inhibitor 36 (PME36), found in Arabidopsis thaliana (Mouse-ear cress).